An 886-amino-acid polypeptide reads, in one-letter code: Alanine--tRNA ligase (886 aa).

4 residues coordinate Zn(2+): histidine 564, histidine 568, cysteine 676, and histidine 680.

It belongs to the class-II aminoacyl-tRNA synthetase family. Requires Zn(2+) as cofactor.

The protein resides in the cytoplasm. It catalyses the reaction tRNA(Ala) + L-alanine + ATP = L-alanyl-tRNA(Ala) + AMP + diphosphate. Its function is as follows. Catalyzes the attachment of alanine to tRNA(Ala) in a two-step reaction: alanine is first activated by ATP to form Ala-AMP and then transferred to the acceptor end of tRNA(Ala). Also edits incorrectly charged Ser-tRNA(Ala) and Gly-tRNA(Ala) via its editing domain. This is Alanine--tRNA ligase from Methylobacterium sp. (strain 4-46).